We begin with the raw amino-acid sequence, 381 residues long: MSRLQFQLQTTDGHARRGRLTFPRGTVETPAFMPVGTYGSVKGILPEQIRALGAEIILGNTFHLYLRPGLDVIGDHGGLHGFARWDGPILTDSGGFQVFSLAHRRKITEQGVTFSSPTDGARVFLGPEESMQIQKVLDSDIVMIFDECTPYPATEDVARRSMELSLRWAQRSRQAHDGLGNDAALFGIVQGGVHPDLRSRSLDGLQAIGFDGYAIGGLAVGEPEHERNAMLEHLHPRLPAERPRYLMGVGRPEDLVEGVARGVDMFDCVMPTRNARNGHYFTSFGTVRIRNAKYERDLDTIEPGCGCHACSSGYTRAYLRHLDRCNEMLAPMLGTLHNLWYYEKLMADMRAAIAAGTFVEFRRSFYAARGATTPPLPGESS.

The active-site Proton acceptor is Asp92. Residues Asp92–Phe96, Asp146, Gln190, and Gly217 each bind substrate. Residues Gly248–Asp254 are RNA binding. Asp267 acts as the Nucleophile in catalysis. The tract at residues Thr272 to Arg276 is RNA binding; important for wobble base 34 recognition. Zn(2+) is bound by residues Cys305, Cys307, Cys310, and His337.

It belongs to the queuine tRNA-ribosyltransferase family. As to quaternary structure, homodimer. Within each dimer, one monomer is responsible for RNA recognition and catalysis, while the other monomer binds to the replacement base PreQ1. The cofactor is Zn(2+).

The catalysed reaction is 7-aminomethyl-7-carbaguanine + guanosine(34) in tRNA = 7-aminomethyl-7-carbaguanosine(34) in tRNA + guanine. Its pathway is tRNA modification; tRNA-queuosine biosynthesis. Catalyzes the base-exchange of a guanine (G) residue with the queuine precursor 7-aminomethyl-7-deazaguanine (PreQ1) at position 34 (anticodon wobble position) in tRNAs with GU(N) anticodons (tRNA-Asp, -Asn, -His and -Tyr). Catalysis occurs through a double-displacement mechanism. The nucleophile active site attacks the C1' of nucleotide 34 to detach the guanine base from the RNA, forming a covalent enzyme-RNA intermediate. The proton acceptor active site deprotonates the incoming PreQ1, allowing a nucleophilic attack on the C1' of the ribose to form the product. After dissociation, two additional enzymatic reactions on the tRNA convert PreQ1 to queuine (Q), resulting in the hypermodified nucleoside queuosine (7-(((4,5-cis-dihydroxy-2-cyclopenten-1-yl)amino)methyl)-7-deazaguanosine). This Xanthomonas campestris pv. campestris (strain B100) protein is Queuine tRNA-ribosyltransferase.